Reading from the N-terminus, the 456-residue chain is Mitochondrial import inner membrane translocase subunit TIM50 (456 aa).

The transit peptide at 1 to 22 (MSLSKLSQKCFSRHHARTFIRF) directs the protein to the mitochondrion. At 23-171 (SSSDFQSLLG…RRKRMERNTR (149 aa)) the chain is on the mitochondrial matrix side. Disordered stretches follow at residues 101–120 (ETEKVASSPAPATPPSAIDE) and 132–165 (EEAAASKTSAPSGSSGDNNDQPGNAEEVEARRKR). The span at 137-153 (SKTSAPSGSSGDNNDQP) shows a compositional bias: polar residues. Residues 172–192 (IGGYVLLGGSVIGFISFCFYY) traverse the membrane as a helical segment. Residues 193 to 456 (GRAQRDEAGN…LFGFRRHASA (264 aa)) lie on the Mitochondrial intermembrane side of the membrane. Positions 247–391 (YLQPKYTIVI…VDLAELLKTI (145 aa)) constitute an FCP1 homology domain.

The protein belongs to the TIM50 family. As to quaternary structure, component of the TIM23 complex at least composed of tim-23, tim-17 and tim-50.

It localises to the mitochondrion inner membrane. Essential component of the TIM23 complex, a complex that mediates the translocation of transit peptide-containing proteins across the mitochondrial inner membrane. The polypeptide is Mitochondrial import inner membrane translocase subunit TIM50 (scpl-4) (Caenorhabditis briggsae).